The primary structure comprises 440 residues: Gap junction gamma-2 protein (440 aa).

At 1-21 (MTNMSWSFLTRLLEEIHNHST) the chain is on the cytoplasmic side. The helical transmembrane segment at 22-42 (FVGKVWLTVLVVFRIVLTAVG) threads the bilayer. Residues 43 to 78 (GESIYSDEQSKFTCNTRQPGCDNVCYDAFAPLSHVR) are Extracellular-facing. The helical transmembrane segment at 79–99 (FWVFQIVVISTPSVMYLGYAV) threads the bilayer. At 100–223 (HRLARASEQE…AQLVVRAAFE (124 aa)) the chain is on the cytoplasmic side. The tract at residues 108 to 199 (QERRRALRRR…TPGPAGQHDG (92 aa)) is disordered. Basic residues predominate over residues 112-124 (RALRRRPGTRRLP). The span at 136–149 (PDTTDLGEAEPILA) shows a compositional bias: low complexity. A compositionally biased stretch (acidic residues) spans 150–173 (LEEDEDEEPGAPEGPGEDTEEERA). Residues 224-244 (VAFLVGQYLLYGFEVPPFFAC) form a helical membrane-spanning segment. Over 245 to 264 (SRQPCPHVVDCFVSRPTEKT) the chain is Extracellular. A helical membrane pass occupies residues 265–285 (VFLLVMYVVSCLCLLLNLCEM). The Cytoplasmic portion of the chain corresponds to 286 to 440 (AHLGLGSAQD…SRDGKATVWI (155 aa)). Residues 369–440 (DRDSPPCAGL…SRDGKATVWI (72 aa)) are disordered. Serine 372 carries the post-translational modification Phosphoserine. Positions 388-401 (VGGLASGTGSATSG) are enriched in low complexity.

The protein belongs to the connexin family. Gamma-type subfamily. In terms of assembly, a connexon is composed of a hexamer of connexins. Interacts with TJP1. Mainly expressed by oligodendrocytes in the central nervous system (at protein level).

It localises to the cell membrane. Its subcellular location is the cell junction. It is found in the gap junction. In terms of biological role, one gap junction consists of a cluster of closely packed pairs of transmembrane channels, the connexons, through which materials of low MW diffuse from one cell to a neighboring cell. May play a role in myelination in central and peripheral nervous systems. The sequence is that of Gap junction gamma-2 protein (Gjc2) from Mus musculus (Mouse).